Consider the following 406-residue polypeptide: Collagen and calcium-binding EGF domain-containing protein 1 (406 aa).

The first 34 residues, 1–34 (MVPPPPSRGGAARGQLGRSLGPLLLLLALGHTWT), serve as a signal peptide directing secretion. Residues 134-175 (DIDECASSNGTLCAHICINTLGSYRCECREGYIREDDGKTCT) enclose the EGF-like; calcium-binding domain. 3 disulfides stabilise this stretch: C138–C150, C146–C159, and C161–C174. An N-linked (GlcNAc...) asparagine glycan is attached at N142. N182 carries an N-linked (GlcNAc...) asparagine glycan. Disordered regions lie at residues 244–335 (YLPG…PGSF) and 360–406 (RTHS…DFYP). 2 consecutive Collagen-like domains span residues 245–290 (LPGP…PMGP) and 300–333 (GRRGPVGPPGAPGRDGSKGERGAPGPRGSPGPPG). Over residues 270–279 (PGMPGPPGQP) the composition is skewed to pro residues. Positions 281–292 (PRGSMGPMGPSP) are enriched in low complexity. S385 is a glycosylation site (O-linked (Xyl...) (chondroitin sulfate) serine). Positions 386–406 (GDDHPRRTETRDLRAPRDFYP) are enriched in basic and acidic residues.

Belongs to the CCBE1 family. In terms of tissue distribution, detected in fibroblasts and urine (at protein level). Not expressed in blood or lymphatic endothelial cells.

The protein resides in the secreted. In terms of biological role, required for lymphangioblast budding and angiogenic sprouting from venous endothelium during embryogenesis. The chain is Collagen and calcium-binding EGF domain-containing protein 1 (CCBE1) from Homo sapiens (Human).